We begin with the raw amino-acid sequence, 64 residues long: Putative isoleucine--tRNA ligase (64 aa).

The protein belongs to the class-I aminoacyl-tRNA synthetase family. As to quaternary structure, member of a complex that includes annexin.

The catalysed reaction is tRNA(Ile) + L-isoleucine + ATP = L-isoleucyl-tRNA(Ile) + AMP + diphosphate. In Physarum polycephalum (Slime mold), this protein is Putative isoleucine--tRNA ligase.